An 874-amino-acid chain; its full sequence is Trimodular acetylaranotin synthesis protein ataIMG (874 aa).

The interval 1-339 (MANLSGLSNR…DSGLLRASSI (339 aa)) is aminotransferase ataI. The segment at 20–39 (RFGFQTTQQAKPTESSKTPI) is disordered. A compositionally biased stretch (polar residues) spans 23 to 37 (FQTTQQAKPTESSKT). The interval 340-668 (SYNSMVKGSS…QERTEAEWRT (329 aa)) is O-methyltransferase ataM. S-adenosyl-L-methionine is bound at residue Asp-625. The glutathione S-transferase ataG stretch occupies residues 669–874 (LAGRTGWEIR…VMEMGPQIGH (206 aa)). The GST N-terminal domain maps to 699–766 (KPLILAHELE…YLADRFDDGT (68 aa)). The GST C-terminal domain maps to 739-874 (DPETKAEVIV…VMEMGPQIGH (136 aa)).

It in the N-terminal section; belongs to the class-I pyridoxal-phosphate-dependent aminotransferase family. The protein in the 2nd section; belongs to the class I-like SAM-binding methyltransferase superfamily. Cation-independent O-methyltransferase family. This sequence in the C-terminal section; belongs to the GST superfamily. Pyridoxal 5'-phosphate serves as cofactor.

It carries out the reaction RX + glutathione = an S-substituted glutathione + a halide anion + H(+). It functions in the pathway mycotoxin biosynthesis. In terms of biological role, trimodular acetylaranotin synthesis protein; part of the gene cluster that mediates the biosynthesis of acetylaranotin, a member of the epipolythiodioxopiperazine (ETP) class of toxins characterized by a disulfide-bridged cyclic dipeptide. The first step of acetylaranotin biosynthesis is performed by the NRPS ataP which produces diketopiperazine cyclo-L-Phe-L-Phe via the condensation of 2 phenylalanines (L-Phe). The ataC domain of ataTC then catalyzes the formation of bishydroxylation of cyclo-L-Phe-L-Phe. The glutathione S-transferase domain ataG in ataIMG further catalyzes the conjugation of two glutathiones to the bishydroxylated intermediate. Next, the dipeptidase ataJ removes the Glu residues. The following step is performed by the carbon sulfur lyase domain ataI of ataIMG which may convert the bis-cysteinyl adduct to yield an epidithiol intermediate. The ataT domain from ataTC then catalyzes the oxidation of the free dithiols, followed by a cyclization step catalyzed by the cytochrome P450 ataF. AtaF probably acts as an epoxidase to promote a dual epoxidation formation at C8 and C9 along with C8' and C9', followed by the spontaneous nucleophilic attack of the amide nitrogens N10 and N10' to yield an intermediate with the pyrrolidine partial structure. The final steps of acetylaranotin biosynthesis involve the acetylation and ring rearrangement of an epitetrathiodiketopiperazine intermediate to produce acetylaranotin. AtaH probably catalyzes the acetylation of epitetrathiodiketopiperazine to produce a diacetate and ataY is responsible for the formation of the dihydrooxepin moiety that converts the diacetate intermediate to acetylaranotin via acetylapoaranotin. Both enzymes could function independently in the absence of the other. The acetylaranotin bis-thiomethyltransferase ataS located outside of acetylaranotin gene cluster is the main thiomethyltransferase responsible for converting acetylaranotin and its related intermediates to their methylated forms. In Aspergillus terreus (strain NIH 2624 / FGSC A1156), this protein is Trimodular acetylaranotin synthesis protein ataIMG.